The chain runs to 632 residues: Extracellular metalloproteinase 2 (632 aa).

The first 19 residues, 1-19, serve as a signal peptide directing secretion; the sequence is MHGLLLAGLAAALPLGVAG. A propeptide spanning residues 20–244 is cleaved from the precursor; that stretch reads LPARQQSGLS…VHNVVDYVAS (225 aa). A glycan (N-linked (GlcNAc...) asparagine) is linked at N270. H429 is a binding site for Zn(2+). Residue E430 is part of the active site. Position 433 (H433) interacts with Zn(2+).

Belongs to the peptidase M36 family. Zn(2+) is required as a cofactor.

Its subcellular location is the secreted. In terms of biological role, secreted metalloproteinase probably acting as a virulence factor. The polypeptide is Extracellular metalloproteinase 2 (MEP2) (Trichophyton tonsurans (Scalp ringworm fungus)).